Consider the following 218-residue polypeptide: N-(5'-phosphoribosyl)anthranilate isomerase (218 aa).

The protein belongs to the TrpF family.

It catalyses the reaction N-(5-phospho-beta-D-ribosyl)anthranilate = 1-(2-carboxyphenylamino)-1-deoxy-D-ribulose 5-phosphate. It functions in the pathway amino-acid biosynthesis; L-tryptophan biosynthesis; L-tryptophan from chorismate: step 3/5. This chain is N-(5'-phosphoribosyl)anthranilate isomerase, found in Bordetella parapertussis (strain 12822 / ATCC BAA-587 / NCTC 13253).